A 690-amino-acid chain; its full sequence is MGLLSIGTPLSWDESKKYNNHVRTNGITQLINIFKQHGYRENDVFLWGDEVEYMLVDFDETKKTARLSIDKDYIINDLNDPDKLLPIAEKQDVSYHPEYGRFMVEATPAKPYNGNLLSDYLYIEKNMIIRRQLCEDNLPSHIKLLTLTTFPRMGCNIFTSPPSKPDGIASQSLFLPDEIINRHARFPTLTANIRKRKGHKVAINLPIYPDKSTKLLDDTIPQNRELFDSDKEPWIGASKPGFIYMDSMGFGMGSSCLQITMQTKNISQARYLYDSLAPIAPIMLSLSAAAPIFKGFLVDQDVRWNVVSGAVDDRTFIEKGQEPYSGYHLFGGLDIDAQDKLRINNHQINQQGDLLDLYTKDGKPIQRVPQSRYDSIDNYLNDNYYDTKYFQDEYNDLNAPINEQVYQRLIDEGKLDKYMANHFAHLFIRDPLVIFSERINQDNNLENDHFENIQSTNWQTLRFKPPALYTKDTDLTTKPGWRVEFRPMEIQLTDFENAAYSSFITLLSKAILKFQPNFYIPLSKVEINMKLAHKVDSTLKDKFWFRSFELWNIDPQEFDDYGFEWFDQFINGNQQQNGHVNNNNNNDKKTKNDPIIVNGSTTTTNGTNSGSGITETNGTMLPKGCEGKTVEEINDVDDNGIDQRYTICQLINGSGEFPGFIKLVIKLIATDLVPQALNNSTISKEQLIEN.

2 stretches are compositionally biased toward low complexity: residues 574 to 585 and 598 to 619; these read QQQNGHVNNNNN and NGST…TNGT. Residues 574–620 form a disordered region; it reads QQQNGHVNNNNNNDKKTKNDPIIVNGSTTTTNGTNSGSGITETNGTM.

It belongs to the glutamate--cysteine ligase type 3 family.

It catalyses the reaction L-cysteine + L-glutamate + ATP = gamma-L-glutamyl-L-cysteine + ADP + phosphate + H(+). The protein operates within sulfur metabolism; glutathione biosynthesis; glutathione from L-cysteine and L-glutamate: step 1/2. This chain is Glutamate--cysteine ligase (GCS1), found in Candida albicans (Yeast).